The following is a 1050-amino-acid chain: Probable E3 ubiquitin-protein ligase HERC3 (1050 aa).

RCC1 repeat units follow at residues 1-51 (MLCW…FLLE), 52-101 (DGEV…ALSD), 102-154 (RGQL…ALAA), 156-207 (GQFF…ALSL), 208-259 (SGAV…VLTK), 261-311 (GGVF…AFVP), and 313-366 (SGLI…IVKQ). The 100-residue stretch at 951-1050 (YKGDYSATHP…LDNYEGFSLA (100 aa)) folds into the HECT domain. Cys-1018 acts as the Glycyl thioester intermediate in catalysis.

In terms of processing, ubiquitinated; which promotes degradation by the proteasome.

It localises to the cytoplasm. The protein localises to the cytoplasmic vesicle. The enzyme catalyses S-ubiquitinyl-[E2 ubiquitin-conjugating enzyme]-L-cysteine + [acceptor protein]-L-lysine = [E2 ubiquitin-conjugating enzyme]-L-cysteine + N(6)-ubiquitinyl-[acceptor protein]-L-lysine.. The protein operates within protein modification; protein ubiquitination. Its function is as follows. E3 ubiquitin-protein ligase which accepts ubiquitin from an E2 ubiquitin-conjugating enzyme in the form of a thioester and then directly transfers the ubiquitin to targeted substrates. In Homo sapiens (Human), this protein is Probable E3 ubiquitin-protein ligase HERC3 (HERC3).